A 280-amino-acid chain; its full sequence is Cell division protein SepF (280 aa).

The interval 22–117 (DYVDDRAPRA…DDYPEDAYGE (96 aa)) is disordered. 2 stretches are compositionally biased toward basic and acidic residues: residues 25-36 (DDRAPRASERGG) and 53-83 (RYGE…GADR).

Belongs to the SepF family. In terms of assembly, homodimer. Interacts with FtsZ.

The protein localises to the cytoplasm. In terms of biological role, cell division protein that is part of the divisome complex and is recruited early to the Z-ring. Probably stimulates Z-ring formation, perhaps through the cross-linking of FtsZ protofilaments. Its function overlaps with FtsA. This chain is Cell division protein SepF, found in Nocardia farcinica (strain IFM 10152).